We begin with the raw amino-acid sequence, 326 residues long: Virulence factor CaO19.6688 (326 aa).

Disordered regions lie at residues 19–91 (FNSL…KLPS), 112–137 (EEDNQEQQLQDGEPLSAPTTNNGTTK), 161–184 (NTTITSSRSNPTNSTPTSNDPSFP), 222–245 (NVGQTPNNNNNNNHGVSETENDLL), and 276–326 (YEYG…PKIK). Composition is skewed to low complexity over residues 21–42 (SLKSSPSSTSSLSSISTSSSSS), 53–78 (NRNTSNSQNSSISTAPTTATAANTTP), and 117–137 (EQQLQDGEPLSAPTTNNGTTK).

Its function is as follows. Virulence factor involved in pathogen-host interaction. Modulates host pro-inflammatory cytokine interleukin-1 beta (IL1B) expression. The polypeptide is Virulence factor CaO19.6688 (Candida albicans (strain SC5314 / ATCC MYA-2876) (Yeast)).